Here is a 440-residue protein sequence, read N- to C-terminus: Adenosylhomocysteinase (440 aa).

Substrate contacts are provided by Thr-47, Asp-123, and Glu-148. 149-151 contributes to the NAD(+) binding site; it reads TTT. Residues Lys-178 and Asp-182 each coordinate substrate. Residues Asn-183, 228 to 233, Glu-251, 307 to 309, and Asn-354 contribute to the NAD(+) site; these read GFGDVG and IGH.

Belongs to the adenosylhomocysteinase family. NAD(+) serves as cofactor.

The catalysed reaction is S-adenosyl-L-homocysteine + H2O = L-homocysteine + adenosine. Its pathway is amino-acid biosynthesis; L-homocysteine biosynthesis; L-homocysteine from S-adenosyl-L-homocysteine: step 1/1. In terms of biological role, adenosylhomocysteine is a competitive inhibitor of S-adenosyl-L-methionine-dependent methyl transferase reactions; therefore adenosylhomocysteinase may play a key role in the control of methylations via regulation of the intracellular concentration of adenosylhomocysteine. In Pneumocystis carinii, this protein is Adenosylhomocysteinase (SAHH).